A 214-amino-acid chain; its full sequence is Proteasome subunit beta (214 aa).

The propeptide at 1–11 is removed in mature form; by autocatalysis; that stretch reads MLDTSQEIMKG. The active-site Nucleophile is threonine 12.

It belongs to the peptidase T1B family. In terms of assembly, the 20S proteasome core is composed of 14 alpha and 14 beta subunits that assemble into four stacked heptameric rings, resulting in a barrel-shaped structure. The two inner rings, each composed of seven catalytic beta subunits, are sandwiched by two outer rings, each composed of seven alpha subunits. The catalytic chamber with the active sites is on the inside of the barrel. Has a gated structure, the ends of the cylinder being occluded by the N-termini of the alpha-subunits. Is capped at one or both ends by the proteasome regulatory ATPase, PAN.

The protein resides in the cytoplasm. The catalysed reaction is Cleavage of peptide bonds with very broad specificity.. With respect to regulation, the formation of the proteasomal ATPase PAN-20S proteasome complex, via the docking of the C-termini of PAN into the intersubunit pockets in the alpha-rings, triggers opening of the gate for substrate entry. Interconversion between the open-gate and close-gate conformations leads to a dynamic regulation of the 20S proteasome proteolysis activity. Functionally, component of the proteasome core, a large protease complex with broad specificity involved in protein degradation. In Methanoculleus marisnigri (strain ATCC 35101 / DSM 1498 / JR1), this protein is Proteasome subunit beta.